The following is a 350-amino-acid chain: Thioredoxin-like fold domain-containing protein MRL7L, chloroplastic (350 aa).

A chloroplast-targeting transit peptide spans 1–48 (MILPFSTQFTCPVQDNGFSPSSLLSHCKRDRFEVTSLRYDSFGSVKTA). Disordered stretches follow at residues 78–107 (KKEE…LDDP) and 182–201 (NEKK…DSEK). 2 stretches are compositionally biased toward acidic residues: residues 82 to 93 (DSDSEDEEDEVK) and 186 to 200 (EEED…DDSE).

It is found in the plastid. Its subcellular location is the chloroplast stroma. The protein localises to the nucleus. Plays an essential role in early steps of chloroplast development. Involved in the regulation of plastid gene expression. Required for the proper function of the plastid transcriptional machinery and protein accumulation in thylakoid membranes. May function as molecular chaperone to ensure proper organization of the nucleoids in chloroplasts. Is a necessary component of phytochrome signaling for photosynthesis-associated plastid-encoded genes (PhAPGs) activation. Mediates the degradation of two repressors of chloroplast biogenesis, PIF1 and PIF3 in nucleus. Promotes the assembly of the plastid-encoded RNA polymerase (PEP) complex for PhAPG transcription in plastids. The polypeptide is Thioredoxin-like fold domain-containing protein MRL7L, chloroplastic (Arabidopsis thaliana (Mouse-ear cress)).